Here is a 433-residue protein sequence, read N- to C-terminus: Casein kinase 1-like protein 5 (433 aa).

Positions 9 to 278 (FRLGRKIGSG…LKRLFRNLFI (270 aa)) constitute a Protein kinase domain. ATP contacts are provided by residues 15-23 (IGSGSFGEI) and Lys38. Residue Asp128 is the Proton acceptor of the active site. A disordered region spans residues 297 to 433 (QSQSGNPQPR…DDVEPQSKAL (137 aa)). Positions 342-359 (LKQKDKNGNDSAIAKDKL) are enriched in basic and acidic residues. Residues 362–375 (GSLNLGRSEGSSSR) show a composition bias toward low complexity. Residue Ser390 is modified to Phosphoserine. Over residues 407 to 423 (INNNAGDETAATPQSNG) the composition is skewed to polar residues.

This sequence belongs to the protein kinase superfamily. CK1 Ser/Thr protein kinase family. Casein kinase I subfamily. In terms of assembly, monomer. Post-translationally, autophosphorylated.

The protein resides in the cytoplasm. It carries out the reaction L-seryl-[protein] + ATP = O-phospho-L-seryl-[protein] + ADP + H(+). The catalysed reaction is L-threonyl-[protein] + ATP = O-phospho-L-threonyl-[protein] + ADP + H(+). Functionally, casein kinases are operationally defined by their preferential utilization of acidic proteins such as caseins as substrates. It can phosphorylate a large number of proteins. The sequence is that of Casein kinase 1-like protein 5 from Arabidopsis thaliana (Mouse-ear cress).